The primary structure comprises 465 residues: Pancreatic triacylglycerol lipase (465 aa).

The signal sequence occupies residues 1 to 16 (MLLLWALPLLLGAVAG). 2 disulfide bridges follow: cysteine 20/cysteine 26 and cysteine 108/cysteine 119. Serine 170 functions as the Nucleophile in the catalytic mechanism. Aspartate 194 serves as the catalytic Charge relay system. The Ca(2+) site is built by glutamate 205, arginine 208, aspartate 210, and aspartate 213. Cysteine 255 and cysteine 279 are disulfide-bonded. Histidine 281 functions as the Charge relay system in the catalytic mechanism. Cystine bridges form between cysteine 303–cysteine 314, cysteine 317–cysteine 321, and cysteine 449–cysteine 465. The 111-residue stretch at 355–465 (WRYQVAVTLS…EDILLTLTPC (111 aa)) folds into the PLAT domain.

It belongs to the AB hydrolase superfamily. Lipase family. Forms a 1:1 stoichiometric complex with (pro)colipase/CLPS.

The protein localises to the secreted. It catalyses the reaction a triacylglycerol + H2O = a diacylglycerol + a fatty acid + H(+). The catalysed reaction is 1,2,3-tributanoylglycerol + H2O = dibutanoylglycerol + butanoate + H(+). The enzyme catalyses 1,2,3-tri-(9Z-octadecenoyl)-glycerol + H2O = di-(9Z)-octadecenoylglycerol + (9Z)-octadecenoate + H(+). It carries out the reaction all-trans-retinyl hexadecanoate + H2O = all-trans-retinol + hexadecanoate + H(+). It catalyses the reaction 1,2-di-(9Z-octadecenoyl)-glycerol + H2O = (9Z-octadecenoyl)-glycerol + (9Z)-octadecenoate + H(+). Its activity is regulated as follows. Inhibited by bile salts, is reactivated by (pro)colipase/CLPS. In terms of biological role, plays an important role in fat metabolism. It preferentially splits the esters of long-chain fatty acids at positions 1 and 3, producing mainly 2-monoacylglycerol and free fatty acids, and shows considerably higher activity against insoluble emulsified substrates than against soluble ones. The polypeptide is Pancreatic triacylglycerol lipase (PNLIP) (Oryctolagus cuniculus (Rabbit)).